The sequence spans 298 residues: Protoheme IX farnesyltransferase (298 aa).

9 helical membrane-spanning segments follow: residues V26–V46, L52–V72, V93–L113, L120–L140, I148–G168, A174–L194, L219–Q239, S241–I261, and Y278–F298.

Belongs to the UbiA prenyltransferase family. Protoheme IX farnesyltransferase subfamily.

The protein resides in the cell inner membrane. It carries out the reaction heme b + (2E,6E)-farnesyl diphosphate + H2O = Fe(II)-heme o + diphosphate. It participates in porphyrin-containing compound metabolism; heme O biosynthesis; heme O from protoheme: step 1/1. Its function is as follows. Converts heme B (protoheme IX) to heme O by substitution of the vinyl group on carbon 2 of heme B porphyrin ring with a hydroxyethyl farnesyl side group. The sequence is that of Protoheme IX farnesyltransferase from Nitrosomonas eutropha (strain DSM 101675 / C91 / Nm57).